The primary structure comprises 85 residues: Large ribosomal subunit protein bL27 (85 aa).

The segment at 1–22 (MAHKKGVGSTRNGRDSESKRLG) is disordered.

Belongs to the bacterial ribosomal protein bL27 family.

The sequence is that of Large ribosomal subunit protein bL27 from Geobacter metallireducens (strain ATCC 53774 / DSM 7210 / GS-15).